The following is a 132-amino-acid chain: Large ribosomal subunit protein bL12 (132 aa).

The segment covering 102–126 has biased composition (basic and acidic residues); sequence APKPIKEATNKDDAESIKKQLEEAG. A disordered region spans residues 102–132; sequence APKPIKEATNKDDAESIKKQLEEAGAKASVK.

This sequence belongs to the bacterial ribosomal protein bL12 family. Homodimer. Part of the ribosomal stalk of the 50S ribosomal subunit. Forms a multimeric L10(L12)X complex, where L10 forms an elongated spine to which 2 to 4 L12 dimers bind in a sequential fashion. Binds GTP-bound translation factors.

Its function is as follows. Forms part of the ribosomal stalk which helps the ribosome interact with GTP-bound translation factors. Is thus essential for accurate translation. This chain is Large ribosomal subunit protein bL12, found in Rippkaea orientalis (strain PCC 8801 / RF-1) (Cyanothece sp. (strain PCC 8801)).